The primary structure comprises 584 residues: uncharacterized protein (584 aa).

4 disordered regions span residues 151–188, 222–243, 399–418, and 433–584; these read EHPP…DNDL, KRKE…SRAN, SETP…PPDF, and MQPS…AKSD. Positions 159–188 are enriched in basic and acidic residues; that stretch reads TSSEKTRSENRERKKRWREQNEERNKDNDL. Low complexity predominate over residues 231 to 243; sequence LSQNQSSNASRAN. Polar residues-rich tracts occupy residues 399-409, 433-453, 483-500, 511-531, and 572-584; these read SETPTPVSGNG, MQPS…SSEM, NAVT…SGSP, NYSQ…SSLP, and QRSS…AKSD.

This is an uncharacterized protein from Schizosaccharomyces pombe (strain 972 / ATCC 24843) (Fission yeast).